A 1009-amino-acid chain; its full sequence is MDMFSLDMIISDPAAEASRAGKKQLRGVQNPCPSARARPRHKSLNIKDKISEWEGKKEVPTPAPSRRADGQEDYLPSSTVERRSSDGVRTQVTEAKNGMRPGTESTEKERNKGAVNVGGQDPEPGQDLSQPEREVDPSWGRGREPRLGKLRFQNDPLSVLKQVKKLEQALKDGSAGLDPQLPGTCYSPHCPPDKAEAGSTLPENLGGGSGSEVSQRVHPSDLEGREPTPELVEDRKGSCRRPWDRSLENVYRGSEGSPTKPFINPLPKPRRTFKHAGEGDKDGKPGIGFRKEKRNLPPLPSLPPPPLPSSPPPSSVNRRLWTGRQKSSADHRKSYEFEDLLQSSSESSRVDWYAQTKLGLTRTLSEENVYEDILDPPMKENPYEDIELHGRCLGKKCVLNFPASPTSSIPDTLTKQSLSKPAFFRQNSERRNFKLLDTRKLSRDGTGSPSKISPPSTPSSPDDIFFNLGDPQNGRKKRKIPKLVLRINAIYEVRRGKKRVKRLSQSMESNSGKVTDENSESDSDTEEKLKAHSQRLVNVKSRLKQAPRYPSLARELIEYQERQLFEYFVVVSLHKKQAGAAYVPELTQQFPLKLERSFKFMREAEDQLKAIPQFCFPDAKDWVPVQQFTSETFSFVLTGEDGSRRFGYCRRLLPGGKGKRLPEVYCIVSRLGCFSLFSRILDEVEKRRGISPALVQPLMRSVMEAPFPALGKTILVKNFLPGSGTEVIELCRPLDSRLEHVDFESLFSSLSVRHLVCVFASLLLERRVIFIADKLSILSKCCHAMVALIYPFAWQHTYIPVLPPAMVDIVCSPTPFLIGLLSSSLPLLRELPLEEVLVVDLVNSRFLRQMDDEDSILPRKLQVALEHILEQRNELACEQDEGPLDGRHGPESSPLNEVVSEAFVRFFVEIVGHYSLFLTSGEREERTLQREAFRKAVSSKSLRHFLEVFMETQMFRGFIQERELRRQDAKGLFEVRAQEYLETLPSGEHSGVNKFLKGLGNKMKFLHKK.

Disordered stretches follow at residues 15–153 (AEAS…LRFQ), 171–334 (KDGS…HRKS), 434–479 (KLLD…KKRK), and 498–532 (KRVK…LKAH). Basic and acidic residues-rich tracts occupy residues 45-59 (NIKD…KKEV), 130-147 (QPER…EPRL), 218-247 (HPSD…DRSL), and 275-284 (HAGEGDKDGK). The span at 297–314 (PPLPSLPPPPLPSSPPPS) shows a compositional bias: pro residues. Positions 434 to 443 (KLLDTRKLSR) are enriched in basic and acidic residues. A compositionally biased stretch (polar residues) spans 503 to 513 (LSQSMESNSGK). At serine 551 the chain carries Phosphoserine. Residues 566–715 (EYFVVVSLHK…PFPALGKTIL (150 aa)) enclose the uDENN domain. The cDENN domain maps to 737–870 (RLEHVDFESL…LQVALEHILE (134 aa)). The region spanning 872–969 (RNELACEQDE…QERELRRQDA (98 aa)) is the dDENN domain.

It is found in the cytoplasm. Its subcellular location is the cytoskeleton. Guanine nucleotide exchange factor (GEF) which may activate RAB9A and RAB9B. Promotes the exchange of GDP to GTP, converting inactive GDP-bound Rab proteins into their active GTP-bound form. May play a role in late endosomes back to trans-Golgi network/TGN transport. This is DENN domain-containing protein 2A (DENND2A) from Homo sapiens (Human).